We begin with the raw amino-acid sequence, 305 residues long: Lipoyl synthase (305 aa).

7 residues coordinate [4Fe-4S] cluster: C41, C46, C52, C68, C72, C75, and S281. The Radical SAM core domain occupies 54-270 (GARRTATFMI…RKVAMDKGFK (217 aa)). Over residues 283–298 (HADEQVNEAAKEKQRQ) the composition is skewed to basic and acidic residues. The tract at residues 283–305 (HADEQVNEAAKEKQRQGEAQLNS) is disordered.

The protein belongs to the radical SAM superfamily. Lipoyl synthase family. [4Fe-4S] cluster is required as a cofactor.

The protein resides in the cytoplasm. It carries out the reaction [[Fe-S] cluster scaffold protein carrying a second [4Fe-4S](2+) cluster] + N(6)-octanoyl-L-lysyl-[protein] + 2 oxidized [2Fe-2S]-[ferredoxin] + 2 S-adenosyl-L-methionine + 4 H(+) = [[Fe-S] cluster scaffold protein] + N(6)-[(R)-dihydrolipoyl]-L-lysyl-[protein] + 4 Fe(3+) + 2 hydrogen sulfide + 2 5'-deoxyadenosine + 2 L-methionine + 2 reduced [2Fe-2S]-[ferredoxin]. The protein operates within protein modification; protein lipoylation via endogenous pathway; protein N(6)-(lipoyl)lysine from octanoyl-[acyl-carrier-protein]. Its function is as follows. Catalyzes the radical-mediated insertion of two sulfur atoms into the C-6 and C-8 positions of the octanoyl moiety bound to the lipoyl domains of lipoate-dependent enzymes, thereby converting the octanoylated domains into lipoylated derivatives. This Staphylococcus aureus (strain Mu3 / ATCC 700698) protein is Lipoyl synthase.